A 150-amino-acid chain; its full sequence is Interferon antagonist OPG027 (150 aa).

The protein belongs to the orthopoxvirus OPG027 family.

In terms of biological role, inhibits antiviral activity induced by type I interferons. Does not block signal transduction of IFN, but is important to counteract the host antiviral state induced by a pre-treatment with IFN. The sequence is that of Interferon antagonist OPG027 (OPG027) from Vaccinia virus (strain Ankara) (VACV).